Reading from the N-terminus, the 373-residue chain is Lipoyl synthase (373 aa).

Residues histidine 12 to isoleucine 36 are disordered. [4Fe-4S] cluster contacts are provided by cysteine 81, cysteine 86, cysteine 92, cysteine 107, cysteine 111, cysteine 114, and serine 323. The Radical SAM core domain occupies phenylalanine 93–serine 312. Positions proline 346 to arginine 373 are disordered.

This sequence belongs to the radical SAM superfamily. Lipoyl synthase family. The cofactor is [4Fe-4S] cluster.

Its subcellular location is the cytoplasm. It carries out the reaction [[Fe-S] cluster scaffold protein carrying a second [4Fe-4S](2+) cluster] + N(6)-octanoyl-L-lysyl-[protein] + 2 oxidized [2Fe-2S]-[ferredoxin] + 2 S-adenosyl-L-methionine + 4 H(+) = [[Fe-S] cluster scaffold protein] + N(6)-[(R)-dihydrolipoyl]-L-lysyl-[protein] + 4 Fe(3+) + 2 hydrogen sulfide + 2 5'-deoxyadenosine + 2 L-methionine + 2 reduced [2Fe-2S]-[ferredoxin]. It participates in protein modification; protein lipoylation via endogenous pathway; protein N(6)-(lipoyl)lysine from octanoyl-[acyl-carrier-protein]: step 2/2. In terms of biological role, catalyzes the radical-mediated insertion of two sulfur atoms into the C-6 and C-8 positions of the octanoyl moiety bound to the lipoyl domains of lipoate-dependent enzymes, thereby converting the octanoylated domains into lipoylated derivatives. This chain is Lipoyl synthase, found in Xylella fastidiosa (strain 9a5c).